A 668-amino-acid chain; its full sequence is mRNA cap guanine-N(7) methyltransferase (668 aa).

The span at 1–19 (MYDPARDSWEERDGDEARS) shows a compositional bias: basic and acidic residues. Residues 1-281 (MYDPARDSWE…RAQVEEAMRA (281 aa)) are disordered. The span at 44–65 (GENNNTTDLQQHPDPSSKTTAS) shows a compositional bias: polar residues. A compositionally biased stretch (low complexity) spans 73 to 88 (SQPAQPTTQTPPSVST). Over residues 100-129 (KASNPQSLTSTAQNQLNKSNTTMENTSGSA) the composition is skewed to polar residues. The span at 133–142 (PRADPSDKPN) shows a compositional bias: basic and acidic residues. Residues 148–157 (ASPTDQNGSQ) are compositionally biased toward polar residues. The segment covering 257 to 279 (LVDRETLRRRQEERERAQVEEAM) has biased composition (basic and acidic residues). The mRNA cap 0 methyltransferase domain maps to 310–668 (SKIKGLRSFN…FYHAFCFYKV (359 aa)). Residue 319–320 (NN) participates in mRNA binding. S-adenosyl-L-methionine is bound by residues Lys-323, Gly-366, Asp-390, Asp-428, 471–473 (MFT), and Tyr-476. A disordered region spans residues 524-547 (ARQAQAKKEKSDEAPEDGEVEEDD). A compositionally biased stretch (acidic residues) spans 537–547 (APEDGEVEEDD).

This sequence belongs to the class I-like SAM-binding methyltransferase superfamily. mRNA cap 0 methyltransferase family.

It is found in the nucleus. The enzyme catalyses a 5'-end (5'-triphosphoguanosine)-ribonucleoside in mRNA + S-adenosyl-L-methionine = a 5'-end (N(7)-methyl 5'-triphosphoguanosine)-ribonucleoside in mRNA + S-adenosyl-L-homocysteine. Its function is as follows. Responsible for methylating the 5'-cap structure of mRNAs. The sequence is that of mRNA cap guanine-N(7) methyltransferase (abd1) from Aspergillus fumigatus (strain ATCC MYA-4609 / CBS 101355 / FGSC A1100 / Af293) (Neosartorya fumigata).